The sequence spans 345 residues: Heat-inducible transcription repressor HrcA (345 aa).

It belongs to the HrcA family.

Its function is as follows. Negative regulator of class I heat shock genes (grpE-dnaK-dnaJ and groELS operons). Prevents heat-shock induction of these operons. This chain is Heat-inducible transcription repressor HrcA, found in Tetragenococcus halophilus (Pediococcus halophilus).